The sequence spans 603 residues: UvrABC system protein C (603 aa).

A GIY-YIG domain is found at 15 to 92 (DQPGCYLMKD…IKKHDPRFNI (78 aa)). The region spanning 197–232 (KTVKNDLMKKMQVAAENMEFEKAGEFRDQINAIETT) is the UVR domain.

It belongs to the UvrC family. As to quaternary structure, interacts with UvrB in an incision complex.

It localises to the cytoplasm. Functionally, the UvrABC repair system catalyzes the recognition and processing of DNA lesions. UvrC both incises the 5' and 3' sides of the lesion. The N-terminal half is responsible for the 3' incision and the C-terminal half is responsible for the 5' incision. This Listeria welshimeri serovar 6b (strain ATCC 35897 / DSM 20650 / CCUG 15529 / CIP 8149 / NCTC 11857 / SLCC 5334 / V8) protein is UvrABC system protein C.